A 304-amino-acid chain; its full sequence is Homoserine O-acetyltransferase (304 aa).

Cys142 functions as the Acyl-thioester intermediate in the catalytic mechanism. 2 residues coordinate substrate: Lys163 and Ser192. His235 acts as the Proton acceptor in catalysis. Glu237 is an active-site residue. Arg249 provides a ligand contact to substrate.

This sequence belongs to the MetA family.

It is found in the cytoplasm. It catalyses the reaction L-homoserine + acetyl-CoA = O-acetyl-L-homoserine + CoA. Its pathway is amino-acid biosynthesis; L-methionine biosynthesis via de novo pathway; O-acetyl-L-homoserine from L-homoserine: step 1/1. Its function is as follows. Transfers an acetyl group from acetyl-CoA to L-homoserine, forming acetyl-L-homoserine. This Clostridium beijerinckii (strain ATCC 51743 / NCIMB 8052) (Clostridium acetobutylicum) protein is Homoserine O-acetyltransferase.